A 255-amino-acid chain; its full sequence is Indole-3-glycerol phosphate synthase (255 aa).

The protein belongs to the TrpC family.

The catalysed reaction is 1-(2-carboxyphenylamino)-1-deoxy-D-ribulose 5-phosphate + H(+) = (1S,2R)-1-C-(indol-3-yl)glycerol 3-phosphate + CO2 + H2O. Its pathway is amino-acid biosynthesis; L-tryptophan biosynthesis; L-tryptophan from chorismate: step 4/5. The chain is Indole-3-glycerol phosphate synthase from Streptococcus pneumoniae (strain Taiwan19F-14).